We begin with the raw amino-acid sequence, 255 residues long: F-box only protein 44 (255 aa).

The region spanning 3-50 (VGNINELPENILLELFTHVPARQLLLNCRLVCSLWRDLIDLVTLWKRK) is the F-box domain. One can recognise an FBA domain in the interval 71 to 252 (FYFLRSLHRN…VTNSSITIGP (182 aa)).

In terms of assembly, part of a SCF (SKP1-cullin-F-box) protein ligase complex. Interacts with SKP1 and CUL1. In terms of tissue distribution, abundantly expressed in brain and kidney. Expressed at lower levels in heart, spleen and liver.

Substrate-recognition component of the SCF (SKP1-CUL1-F-box protein)-type E3 ubiquitin ligase complex. The sequence is that of F-box only protein 44 (FBXO44) from Homo sapiens (Human).